Reading from the N-terminus, the 296-residue chain is MANLNKRPDWIKVKAPNSTEYYNTKDLIKNLRLNTVCEEAACPNIGECWSKKHTTVMILGSVCTRACRFCNVKTGRPDLLDPYEPQRLAEAVQKLNLKHVVITSVDRDDLEDGGASHFAECISEIRKSSPNTTIEILTPDFLRKEGAAEIIANAKPDVFNHNVETVPSLYKTIRPGARYYNSLSLLHNIKKLSPEIFTKSGMMVGLGEEINEVVQVIDDLREAKVDFLTIGQYLQPTKNHAEVAKYVTPEEFKYLERVAKTKGFLMVSANPLTRSSYHADEDFQKLKENYQQKLVS.

[4Fe-4S] cluster is bound by residues C37, C42, C48, C63, C67, C70, and S276. In terms of domain architecture, Radical SAM core spans 49 to 265 (WSKKHTTVMI…ERVAKTKGFL (217 aa)).

It belongs to the radical SAM superfamily. Lipoyl synthase family. [4Fe-4S] cluster serves as cofactor.

Its subcellular location is the cytoplasm. The enzyme catalyses [[Fe-S] cluster scaffold protein carrying a second [4Fe-4S](2+) cluster] + N(6)-octanoyl-L-lysyl-[protein] + 2 oxidized [2Fe-2S]-[ferredoxin] + 2 S-adenosyl-L-methionine + 4 H(+) = [[Fe-S] cluster scaffold protein] + N(6)-[(R)-dihydrolipoyl]-L-lysyl-[protein] + 4 Fe(3+) + 2 hydrogen sulfide + 2 5'-deoxyadenosine + 2 L-methionine + 2 reduced [2Fe-2S]-[ferredoxin]. It functions in the pathway protein modification; protein lipoylation via endogenous pathway; protein N(6)-(lipoyl)lysine from octanoyl-[acyl-carrier-protein]: step 2/2. Its function is as follows. Catalyzes the radical-mediated insertion of two sulfur atoms into the C-6 and C-8 positions of the octanoyl moiety bound to the lipoyl domains of lipoate-dependent enzymes, thereby converting the octanoylated domains into lipoylated derivatives. The sequence is that of Lipoyl synthase from Rickettsia peacockii (strain Rustic).